A 259-amino-acid chain; its full sequence is Complement factor D (259 aa).

A signal peptide spans 1–21 (MADRSGHLAALILLGAAVCVA). The propeptide at 22–26 (QPRGR) is activation peptide. The Peptidase S1 domain occupies 27 to 254 (ILGGQEAKSH…YVAWIDGVMA (228 aa)). Residues Cys-52 and Cys-68 are joined by a disulfide bond. Residues His-67 and Asp-115 each act as charge relay system in the active site. Intrachain disulfides connect Cys-149–Cys-215, Cys-180–Cys-196, and Cys-205–Cys-230. The Charge relay system role is filled by Ser-209. The self-inhibitor loop stretch occupies residues 224–228 (TSGSR).

The protein belongs to the peptidase S1 family. Post-translationally, CFD is activated by the removal of 5 residues at the N-terminus, named activation peptide, by the MASP-3 isoform of MASP1.

The protein resides in the secreted. It carries out the reaction Selective cleavage of Arg-|-Lys bond in complement factor B when in complex with complement subcomponent C3b or with cobra venom factor.. With respect to regulation, circulates in plasma in a mature but self-inhibited form. Activated by factor B (CFB), which displaces the self-inhibition loop. Associates with CFB complexed with complement C3b. Serine protease that initiates the alternative pathway of the complement system, a cascade of proteins that leads to phagocytosis and breakdown of pathogens and signaling that strengthens the adaptive immune system. In contrast to other complement pathways (classical, lectin and GZMK) that are directly activated by pathogens or antigen-antibody complexes, the alternative complement pathway is initiated by the spontaneous hydrolysis of complement C3. The alternative complement pathway acts as an amplification loop that enhances complement activation by mediating the formation of C3 and C5 convertases. Activated CFD cleaves factor B (CFB) when the latter is complexed with complement C3b, activating the C3 convertase of the alternative pathway. The polypeptide is Complement factor D (CFD) (Sus scrofa (Pig)).